A 413-amino-acid chain; its full sequence is Multifunctional CCA protein (413 aa).

2 residues coordinate ATP: Gly-8 and Arg-11. Residues Gly-8 and Arg-11 each contribute to the CTP site. Residues Asp-21 and Asp-23 each coordinate Mg(2+). Arg-91, Arg-143, and Arg-146 together coordinate ATP. 3 residues coordinate CTP: Arg-91, Arg-143, and Arg-146. Residues 232–333 (TGVHVMMVID…VRLLERADAL (102 aa)) form the HD domain.

Belongs to the tRNA nucleotidyltransferase/poly(A) polymerase family. Bacterial CCA-adding enzyme type 1 subfamily. In terms of assembly, monomer. Can also form homodimers and oligomers. The cofactor is Mg(2+). Requires Ni(2+) as cofactor.

The enzyme catalyses a tRNA precursor + 2 CTP + ATP = a tRNA with a 3' CCA end + 3 diphosphate. The catalysed reaction is a tRNA with a 3' CCA end + 2 CTP + ATP = a tRNA with a 3' CCACCA end + 3 diphosphate. Functionally, catalyzes the addition and repair of the essential 3'-terminal CCA sequence in tRNAs without using a nucleic acid template. Adds these three nucleotides in the order of C, C, and A to the tRNA nucleotide-73, using CTP and ATP as substrates and producing inorganic pyrophosphate. tRNA 3'-terminal CCA addition is required both for tRNA processing and repair. Also involved in tRNA surveillance by mediating tandem CCA addition to generate a CCACCA at the 3' terminus of unstable tRNAs. While stable tRNAs receive only 3'-terminal CCA, unstable tRNAs are marked with CCACCA and rapidly degraded. The chain is Multifunctional CCA protein from Burkholderia pseudomallei (strain K96243).